The sequence spans 355 residues: MKSRPQEFQEDFYIPIPLDTNNITALSPFLVPQDHLGGSGIFMIMTVFMLFLFIGGTSINVLTIVCTVQYKKLRSHLNYILVNLAISNLLVSTVGSFTAFVSFLNRYFIFGPTACKIEGFVATLGGMVSLWSLSVVAFERWLVICKPVGNFSFKGTHAIIGCALTWFFALLASTPPLFGWSRYIPEGLQCSCGPDWYTTENKYNNESYVMFLFCFCFGFPFTVILFCYGQLLFTLKSAAKAQADSASTQKAEREVTKMVVVMVMGFLVCWLPYASFALWVVFNRGQSFDLRLGTIPSCFSKASTVYNPVIYVFMNKQFRSCMMKLIFCGKSPFGDDEEASSSSQVTQVSSVGPEK.

Over 1–41 (MKSRPQEFQEDFYIPIPLDTNNITALSPFLVPQDHLGGSGI) the chain is Extracellular. N-linked (GlcNAc...) asparagine glycosylation occurs at asparagine 22. Residues 42–66 (FMIMTVFMLFLFIGGTSINVLTIVC) form a helical membrane-spanning segment. Residues 67 to 78 (TVQYKKLRSHLN) are Cytoplasmic-facing. The helical transmembrane segment at 79 to 104 (YILVNLAISNLLVSTVGSFTAFVSFL) threads the bilayer. At 105–118 (NRYFIFGPTACKIE) the chain is on the extracellular side. A disulfide bridge links cysteine 115 with cysteine 192. The helical transmembrane segment at 119-138 (GFVATLGGMVSLWSLSVVAF) threads the bilayer. Residues 139-157 (ERWLVICKPVGNFSFKGTH) lie on the Cytoplasmic side of the membrane. Residues 158-181 (AIIGCALTWFFALLASTPPLFGWS) form a helical membrane-spanning segment. At 182-207 (RYIPEGLQCSCGPDWYTTENKYNNES) the chain is on the extracellular side. A glycan (N-linked (GlcNAc...) asparagine) is linked at asparagine 205. The chain crosses the membrane as a helical span at residues 208–235 (YVMFLFCFCFGFPFTVILFCYGQLLFTL). Residues 236-257 (KSAAKAQADSASTQKAEREVTK) are Cytoplasmic-facing. Residues 258–281 (MVVVMVMGFLVCWLPYASFALWVV) traverse the membrane as a helical segment. Topologically, residues 282-289 (FNRGQSFD) are extracellular. Residues 290–314 (LRLGTIPSCFSKASTVYNPVIYVFM) form a helical membrane-spanning segment. Position 301 is an N6-(retinylidene)lysine (lysine 301). Residues 315–355 (NKQFRSCMMKLIFCGKSPFGDDEEASSSSQVTQVSSVGPEK) are Cytoplasmic-facing. Positions 334-355 (GDDEEASSSSQVTQVSSVGPEK) are disordered. Residues 340-355 (SSSSQVTQVSSVGPEK) are compositionally biased toward low complexity.

The protein belongs to the G-protein coupled receptor 1 family. Opsin subfamily. Post-translationally, phosphorylated on some or all of the serine and threonine residues present in the C-terminal region. In terms of tissue distribution, the color pigments are found in the cone photoreceptor cells.

The protein resides in the membrane. Its function is as follows. Visual pigments are the light-absorbing molecules that mediate vision. They consist of an apoprotein, opsin, covalently linked to cis-retinal. The sequence is that of Blue-sensitive opsin (B23) from Psalidodon fasciatus (Banded astyanax).